Consider the following 165-residue polypeptide: Chorismate pyruvate-lyase (165 aa).

Residues M35, R77, L115, and E156 each coordinate substrate.

Belongs to the UbiC family. As to quaternary structure, monomer.

It localises to the cytoplasm. It catalyses the reaction chorismate = 4-hydroxybenzoate + pyruvate. It functions in the pathway cofactor biosynthesis; ubiquinone biosynthesis. Functionally, removes the pyruvyl group from chorismate, with concomitant aromatization of the ring, to provide 4-hydroxybenzoate (4HB) for the ubiquinone pathway. In Shigella dysenteriae serotype 1 (strain Sd197), this protein is Chorismate pyruvate-lyase.